The primary structure comprises 126 residues: RutC family protein SSO3206 (126 aa).

Belongs to the RutC family.

The chain is RutC family protein SSO3206 from Saccharolobus solfataricus (strain ATCC 35092 / DSM 1617 / JCM 11322 / P2) (Sulfolobus solfataricus).